The following is a 101-amino-acid chain: Chaperone modulatory protein CbpM (101 aa).

It belongs to the CbpM family.

Interacts with CbpA and inhibits both the DnaJ-like co-chaperone activity and the DNA binding activity of CbpA. Together with CbpA, modulates the activity of the DnaK chaperone system. Does not inhibit the co-chaperone activity of DnaJ. This Salmonella paratyphi A (strain ATCC 9150 / SARB42) protein is Chaperone modulatory protein CbpM.